Here is a 64-residue protein sequence, read N- to C-terminus: Large ribosomal subunit protein bL35 (64 aa).

It belongs to the bacterial ribosomal protein bL35 family.

In Pseudomonas entomophila (strain L48), this protein is Large ribosomal subunit protein bL35.